A 279-amino-acid polypeptide reads, in one-letter code: DegV domain-containing protein SA1258 (279 aa).

In terms of domain architecture, DegV spans Q4 to K278. Residues T61 and S93 each contribute to the hexadecanoate site.

Functionally, may bind long-chain fatty acids, such as palmitate, and may play a role in lipid transport or fatty acid metabolism. The chain is DegV domain-containing protein SA1258 from Staphylococcus aureus (strain N315).